The primary structure comprises 128 residues: Large ribosomal subunit protein uL24 (128 aa).

This sequence belongs to the universal ribosomal protein uL24 family. As to quaternary structure, part of the 50S ribosomal subunit.

Its function is as follows. One of two assembly initiator proteins, it binds directly to the 5'-end of the 23S rRNA, where it nucleates assembly of the 50S subunit. In terms of biological role, located at the polypeptide exit tunnel on the outside of the subunit. In Pyrobaculum calidifontis (strain DSM 21063 / JCM 11548 / VA1), this protein is Large ribosomal subunit protein uL24.